Reading from the N-terminus, the 244-residue chain is Probable transcriptional regulatory protein TT_C0469 (244 aa).

It belongs to the TACO1 family.

The protein localises to the cytoplasm. The protein is Probable transcriptional regulatory protein TT_C0469 of Thermus thermophilus (strain ATCC BAA-163 / DSM 7039 / HB27).